Here is a 326-residue protein sequence, read N- to C-terminus: Target of rapamycin complex subunit lst8 (326 aa).

7 WD repeats span residues 1 to 37 (MNVNQGTVGSDPVILATAGYDHTVRFWQAHSGICTRT), 40 to 80 (HQDS…PVIN), 83 to 122 (GVSKNITSVGFHEDGRWMYTGGEDCMARIWDLRSRNLQCQ), 126 to 165 (QVNAPINCVCLHPNQAELIVGDQSGVIHIWDLKTDHNEQL), 168 to 207 (EPDVSVNSVHIDPDASYMAAVNSSGNCYVWNLAGGMGDEV), 218 to 257 (AHKRYSLRCKFSPDSTLLATCSADQTCKIWRTSNFSLMTE), and 268 to 309 (TSRG…REYS).

It belongs to the WD repeat LST8 family. As to quaternary structure, part of the mechanistic target of rapamycin complex 1 (mTORC1) which contains MTOR, MLST8 and RPTOR. Component of the mechanistic target of rapamycin complex 2 (mTORC2), consisting in two heterotretramers composed of MTOR, MLST8, RICTOR and MAPKAP1/SIN1.

Its subcellular location is the lysosome membrane. The protein localises to the cytoplasm. Functionally, subunit of both mTORC1 and mTORC2, which regulates cell growth and survival in response to nutrient and hormonal signals. mTORC1 is activated in response to growth factors or amino acids. In response to nutrients, mTORC1 is recruited to the lysosome membrane and promotes protein, lipid and nucleotide synthesis by phosphorylating several substrates, such as ribosomal protein S6 kinase (RPS6KB1 and RPS6KB2) and EIF4EBP1 (4E-BP1). In the same time, it inhibits catabolic pathways by phosphorylating the autophagy initiation components ULK1 and ATG13, as well as transcription factor TFEB, a master regulators of lysosomal biogenesis and autophagy. The mTORC1 complex is inhibited in response to starvation and amino acid depletion. Within mTORC1, MLST8 interacts directly with MTOR and enhances its kinase activity. In nutrient-poor conditions, stabilizes the MTOR-RPTOR interaction and favors RPTOR-mediated inhibition of MTOR activity. As part of the mTORC2 complex, transduces signals from growth factors to pathways involved in proliferation, cytoskeletal organization, lipogenesis and anabolic output. mTORC2 is also activated by growth factors, but seems to be nutrient-insensitive. In response to growth factors, mTORC2 phosphorylates and activates AGC protein kinase family members, including AKT (AKT1, AKT2 and AKT3), PKC (PRKCA, PRKCB and PRKCE) and SGK1. mTORC2 functions upstream of Rho GTPases to regulate the actin cytoskeleton, probably by activating one or more Rho-type guanine nucleotide exchange factors. mTORC2 promotes the serum-induced formation of stress-fibers or F-actin. Within mTORC2, MLST8 acts as a bridge between MAPKAP1/SIN1 and MTOR. This chain is Target of rapamycin complex subunit lst8 (mlst8), found in Danio rerio (Zebrafish).